The primary structure comprises 243 residues: Phosphoribosylaminoimidazole-succinocarboxamide synthase (243 aa).

This sequence belongs to the SAICAR synthetase family.

The enzyme catalyses 5-amino-1-(5-phospho-D-ribosyl)imidazole-4-carboxylate + L-aspartate + ATP = (2S)-2-[5-amino-1-(5-phospho-beta-D-ribosyl)imidazole-4-carboxamido]succinate + ADP + phosphate + 2 H(+). It participates in purine metabolism; IMP biosynthesis via de novo pathway; 5-amino-1-(5-phospho-D-ribosyl)imidazole-4-carboxamide from 5-amino-1-(5-phospho-D-ribosyl)imidazole-4-carboxylate: step 1/2. In Prochlorococcus marinus (strain MIT 9211), this protein is Phosphoribosylaminoimidazole-succinocarboxamide synthase.